We begin with the raw amino-acid sequence, 323 residues long: uncharacterized protein (323 aa).

Residues 1–142 (MPSVFFSYSH…QVAKAVREAA (142 aa)) form the TIR domain.

This is an uncharacterized protein from Sinorhizobium fredii (strain NBRC 101917 / NGR234).